The chain runs to 126 residues: FCS-Like Zinc finger 17 (126 aa).

The segment at 41-85 (CFLKTCHLCNKQLHQDKDVYMYRGDLGFCSRECRESQMLIDDRKE) adopts an FLZ-type zinc-finger fold.

This sequence belongs to the FLZ family. As to quaternary structure, interacts with KIN10 and KIN11 via its FLZ-type zinc finger domain. Forms heterodimer with FLZ2 in vitro.

It localises to the nucleus. The protein resides in the cytoplasm. May act as an adapter to facilitate the interaction of SnRK1 complex with effector proteins, conferring tissue- and stimulus-type specific differences in the SnRK1 regulation pathway. The sequence is that of FCS-Like Zinc finger 17 from Arabidopsis thaliana (Mouse-ear cress).